The sequence spans 77 residues: Integrin beta-2 (77 aa).

An intrachain disulfide couples cysteine 36 to cysteine 43. Asparagine 54 is a glycosylation site (N-linked (GlcNAc...) asparagine).

It belongs to the integrin beta chain family. In terms of assembly, dimer of an alpha and beta subunit.

The protein localises to the membrane. Functionally, integrins are a large family of cell surface glycoproteins that mediate cell to cell and cell to matrix adhesion. The protein is Integrin beta-2 (itgb2) of Xenopus laevis (African clawed frog).